The primary structure comprises 424 residues: Serine hydroxymethyltransferase 2 (424 aa).

(6S)-5,6,7,8-tetrahydrofolate is bound by residues Leu-125 and Gly-129–Leu-131. Position 234 is an N6-(pyridoxal phosphate)lysine (Lys-234). Position 250 (Glu-250) interacts with (6S)-5,6,7,8-tetrahydrofolate.

It belongs to the SHMT family. As to quaternary structure, homodimer. The cofactor is pyridoxal 5'-phosphate.

The protein localises to the cytoplasm. It carries out the reaction (6R)-5,10-methylene-5,6,7,8-tetrahydrofolate + glycine + H2O = (6S)-5,6,7,8-tetrahydrofolate + L-serine. Its pathway is one-carbon metabolism; tetrahydrofolate interconversion. It functions in the pathway amino-acid biosynthesis; glycine biosynthesis; glycine from L-serine: step 1/1. Catalyzes the reversible interconversion of serine and glycine with tetrahydrofolate (THF) serving as the one-carbon carrier. This reaction serves as the major source of one-carbon groups required for the biosynthesis of purines, thymidylate, methionine, and other important biomolecules. Also exhibits THF-independent aldolase activity toward beta-hydroxyamino acids, producing glycine and aldehydes, via a retro-aldol mechanism. This Cupriavidus pinatubonensis (strain JMP 134 / LMG 1197) (Cupriavidus necator (strain JMP 134)) protein is Serine hydroxymethyltransferase 2.